The chain runs to 374 residues: Translocating chain-associated membrane protein 1 (374 aa).

The Cytoplasmic portion of the chain corresponds to 1-29 (MAIRKKSTKSPPVLSHEFVLQNHADIVSC). The chain crosses the membrane as a helical span at residues 30-50 (VAMVFLLGLMFEITAKASIIF). At 51–76 (VTLQYNVTLPATEEQATESVSLYYYG) the chain is on the lumenal side. The N-linked (GlcNAc...) asparagine glycan is linked to N56. A helical membrane pass occupies residues 77 to 97 (IKDLATVFFYMLVAIIIHAVI). At 98–121 (QEYMLDKINRRMHFSKTKHSKFNE) the chain is on the cytoplasmic side. Residues 117–326 (SKFNESGQLS…NFQLRRWREH (210 aa)) enclose the TLC domain. A helical membrane pass occupies residues 122 to 142 (SGQLSAFYLFACVWGTFILIS). Residues 143–159 (ENYISDPTILWRAYPHN) are Lumenal-facing. Residues 160-180 (LMTFQMKFFYISQLAYWLHAF) traverse the membrane as a helical segment. Residues 181–192 (PELYFQKTKKED) are Cytoplasmic-facing. The helical transmembrane segment at 193–213 (IPRQLVYIGLYLFHIAGAYLL) threads the bilayer. Residues 214–217 (NLNH) lie on the Lumenal side of the membrane. Residues 218–238 (LGLVLLVLHYFVEFLFHISRL) traverse the membrane as a helical segment. At 239-251 (FYFSNEKYQKGFS) the chain is on the cytoplasmic side. A helical membrane pass occupies residues 252 to 272 (LWAVLFVLGRLLTLILSVLTV). Residues 273–297 (GFGLARAENQKLDFSTGNFNVLAVR) are Lumenal-facing. The helical transmembrane segment at 298-318 (IAVLASICVTQAFMMWKFINF) threads the bilayer. The Cytoplasmic portion of the chain corresponds to 319–374 (QLRRWREHSAFQAPAVKKKPTVTKGRSSKKGTENGVNGTLTSNVADSPRNKKEKSS). Basic residues predominate over residues 334–347 (VKKKPTVTKGRSSK). Residues 334–374 (VKKKPTVTKGRSSKKGTENGVNGTLTSNVADSPRNKKEKSS) are disordered. Positions 352–363 (NGVNGTLTSNVA) are enriched in polar residues. At S365 the chain carries Phosphoserine.

The protein belongs to the TRAM family. In terms of assembly, interacts with SEC61B. May interact with Derlin-1/DERL1. (Microbial infection) Interacts with human cytomegalovirus/HHV-5 proteins US2 and US11. In terms of processing, N-glycosylated.

The protein localises to the endoplasmic reticulum membrane. In terms of biological role, involved in the translocation of nascent protein chains into or through the endoplasmic reticulum (ER) membrane by facilitating the proper chain positioning at the SEC61 channel. Regulates the exposure of nascent secretory protein chain to the cytosol during translocation into the ER. May affect the phospholipid bilayer in the vicinity of the lateral gate of the SEC61 channel, thereby facilitating ER protein transport. Intimately associates with transmembrane (TM) domain of nascent membrane proteins during the entire integration process into the ER membrane. Associates with the second TM domain of G-protein-coupled receptor opsin/OPSD nascent chain in the ER membrane, which may facilitate its integration into the membrane. Under conditions of ER stress, participates in the disposal of misfolded ER membrane proteins during the unfolded protein response (UPR), an integrated stress response (ISR) pathway, by selectively retrotranslocating misfolded ER-membrane proteins from the ER into the cytosol where they are ubiquitinated and degraded by the proteasome. Its function is as follows. (Microbial infection) In case of cytomegalovirus infection, participates in US2- and US11-mediated ER-to-cytosol retrotranslocation and subsequent degradation of major histocompatibility complex (MHC) class I heavy chains, thereby decreasing the immune detection by cytotoxic T-cells. The chain is Translocating chain-associated membrane protein 1 from Homo sapiens (Human).